The sequence spans 82 residues: Antimicrobial peptide Smp43 (82 aa).

Positions 1–22 (MNRKLLLVTLMVTMLVMQPAEA) are cleaved as a signal peptide. Residues 66-82 (EAGQMPFDEFMDILYES) constitute a propeptide that is removed on maturation.

This sequence belongs to the non-disulfide-bridged peptide (NDBP) superfamily. Long chain multifunctional peptide (group 2) family. In terms of tissue distribution, expressed by the venom gland.

The protein localises to the secreted. It localises to the target cell membrane. Antimicrobial peptide with moderate activity against Gram-positive bacteria and Gram-negative bacteria, as well as low activity against fungi. Acts by inducing bacterial membrane disruption. Shows activity against B.subtilis (MIC=4 ug/ml), S.epidermidis (MIC=64 ug/ml), S.aureus (MIC=32 ug/ml), E.coli (MIC=128 ug/ml), K.pneumoniae (MIC=64 ug/ml), P.aeruginosa (MIC=64 ug/ml), and C.albicans (MIC=128 ug/ml). Does not show hemolysis activity. The sequence is that of Antimicrobial peptide Smp43 from Scorpio palmatus (Israeli golden scorpion).